Consider the following 268-residue polypeptide: MSQLLSSPPMAVFSKTFINHKFSDARFLSSHSILTSGGFAGKIIPLKPTARLKLTVKSRQSDYFEKQRFGDSSSSQNAEVSSPRFYVGHSIYKGKAALTIEPRAPEFVALESGAFKLTKEGFLLLQFAPAAGVRQYDWSRKQVFSLSVTEIGNLVSLGPRESCEFFHDPFKGKGSDEGKVRKVLKVEPLPDGSGRFFNLSVQNKLLNVDESVYIPITKAEFAVLISAFNFVLPHLIGWSAFANSIKPEDSNRLNNASPKYGGDYEWSR.

A chloroplast-targeting transit peptide spans 1-75 (MSQLLSSPPM…KQRFGDSSSS (75 aa)). The interval 93–98 (KGKAAL) is required for ssDNA binding. The Nuclear localization signal motif lies at 171-185 (KGKGSDEGKVRKVLK).

Belongs to the Whirly family. In terms of assembly, homotetramer.

The protein resides in the plastid. It localises to the chloroplast. It is found in the nucleus. Single-stranded DNA-binding protein that functions in both chloroplasts and nucleus. In chloroplasts, maintains plastid genome stability by preventing break-induced and short homology-dependent illegitimate recombinations. In the nucleus, is recruited to a distal element upstream of the kinesin KP1 to mediate the transcriptional repression of KP1. Can bind double-stranded DNA in vivo. The chain is Single-stranded DNA-binding protein WHY3, chloroplastic (WHY3) from Arabidopsis thaliana (Mouse-ear cress).